A 229-amino-acid chain; its full sequence is Aquaporin Z (229 aa).

2 helical membrane-spanning segments follow: residues Phe-8–Val-28 and Ile-33–Ile-53. Residues Asn-62–Ala-64 carry the NPA 1 motif. Transmembrane regions (helical) follow at residues Leu-81–Ile-101, Ala-131–Thr-151, and Gly-158–Val-178. Positions Asn-184–Ala-186 match the NPA 2 motif. Residues Ala-199–Leu-219 form a helical membrane-spanning segment.

The protein belongs to the MIP/aquaporin (TC 1.A.8) family. Homotetramer.

It localises to the cell inner membrane. It carries out the reaction H2O(in) = H2O(out). In terms of biological role, channel that permits osmotically driven movement of water in both directions. It is involved in the osmoregulation and in the maintenance of cell turgor during volume expansion in rapidly growing cells. It mediates rapid entry or exit of water in response to abrupt changes in osmolarity. The protein is Aquaporin Z of Pseudomonas aeruginosa (strain ATCC 15692 / DSM 22644 / CIP 104116 / JCM 14847 / LMG 12228 / 1C / PRS 101 / PAO1).